The following is a 604-amino-acid chain: uncharacterized protein (604 aa).

The first 40 residues, 1–40 (MWLQQRIKVFPGLLSSSWARRVLAVSGFLVIIYWYIFSGS), serve as a signal peptide directing secretion. Topologically, residues 41–563 (HYRSFWYSGK…EEHMAKQYRG (523 aa)) are extracellular. N-linked (GlcNAc...) asparagine glycosylation occurs at Asn-337. The helical transmembrane segment at 564–584 (LPFLFWFSVASLITLFHLFLF) threads the bilayer. Topologically, residues 585–604 (KLIYNEYCGPGAKPLFRSKV) are cytoplasmic.

The protein resides in the membrane. This is an uncharacterized protein from Xenopus laevis (African clawed frog).